Reading from the N-terminus, the 513-residue chain is ATP synthase subunit alpha (513 aa).

169–176 (GDRQIGKT) contacts ATP.

The protein belongs to the ATPase alpha/beta chains family. F-type ATPases have 2 components, CF(1) - the catalytic core - and CF(0) - the membrane proton channel. CF(1) has five subunits: alpha(3), beta(3), gamma(1), delta(1), epsilon(1). CF(0) has three main subunits: a(1), b(2) and c(9-12). The alpha and beta chains form an alternating ring which encloses part of the gamma chain. CF(1) is attached to CF(0) by a central stalk formed by the gamma and epsilon chains, while a peripheral stalk is formed by the delta and b chains.

The protein resides in the cell inner membrane. The catalysed reaction is ATP + H2O + 4 H(+)(in) = ADP + phosphate + 5 H(+)(out). In terms of biological role, produces ATP from ADP in the presence of a proton gradient across the membrane. The alpha chain is a regulatory subunit. This chain is ATP synthase subunit alpha, found in Francisella tularensis subsp. tularensis (strain SCHU S4 / Schu 4).